The sequence spans 157 residues: Protein MG115 homolog (157 aa).

This sequence belongs to the CinA family.

This Mycoplasma pneumoniae (strain ATCC 29342 / M129 / Subtype 1) (Mycoplasmoides pneumoniae) protein is Protein MG115 homolog.